The chain runs to 239 residues: Uridylate kinase (239 aa).

13–16 serves as a coordination point for ATP; that stretch reads KVSG. Gly-55 is a UMP binding site. Gly-56 and Arg-60 together coordinate ATP. UMP-binding positions include Asp-75 and 136–143; that span reads TGNPFFTT. ATP-binding residues include Thr-163, Gln-164, Tyr-169, and Asp-172.

It belongs to the UMP kinase family. As to quaternary structure, homohexamer.

The protein resides in the cytoplasm. It carries out the reaction UMP + ATP = UDP + ADP. It participates in pyrimidine metabolism; CTP biosynthesis via de novo pathway; UDP from UMP (UMPK route): step 1/1. With respect to regulation, inhibited by UTP. In terms of biological role, catalyzes the reversible phosphorylation of UMP to UDP. The chain is Uridylate kinase from Bartonella bacilliformis (strain ATCC 35685 / KC583 / Herrer 020/F12,63).